Reading from the N-terminus, the 318-residue chain is MTTVPVTDIQNDLITEFSEDNYPSNKNYEITLRQMSILTHVNNVVDREHNAAVVSSPEEISSQLNEDLFPDDDSPATIIERVQPHTTIIDDTPPPTFRRELLISEQRQQREKRFNITVSKNAEAIMESRSMITSMPTQTPSLGVVYDKDKRIQMLEDEVVNLRNQRSNTKSSDNLDNFTKILFGKTPYKSTEVNKRIAIVNYANLNGSPLSVEDLDVCSEDEIDRIYKTIKQYHESRKQKIIVTNVIIIVINIIEQALLKLGFEEIKGLSTDITSEIIDVEIGDDCDAVASKLGIGNSPVLNIVLFILKIFVKRIKII.

Residues 145-172 (VYDKDKRIQMLEDEVVNLRNQRSNTKSS) adopt a coiled-coil conformation.

This sequence belongs to the orthopoxvirus OPG137 family. In terms of assembly, homomultimer. Interacts with OPG160. Phosphorylated by a OPG054-independent mechanism.

The protein resides in the host cytoplasm. Required for viral crescent formation early during virus morphogenesis. The sequence is that of Protein OPG137 (OPG137) from Vaccinia virus (strain Western Reserve) (VACV).